The following is a 348-amino-acid chain: Dihydroorotase (348 aa).

Positions 14 and 16 each coordinate Zn(2+). Substrate contacts are provided by residues 16 to 18 (HLR) and N42. Zn(2+) contacts are provided by K100, H137, and H175. K100 carries the N6-carboxylysine modification. Residue H137 coordinates substrate. Position 220 (L220) interacts with substrate. D248 serves as a coordination point for Zn(2+). The active site involves D248. Residues H252 and A264 each contribute to the substrate site.

Belongs to the metallo-dependent hydrolases superfamily. DHOase family. Class II DHOase subfamily. As to quaternary structure, homodimer. It depends on Zn(2+) as a cofactor.

The catalysed reaction is (S)-dihydroorotate + H2O = N-carbamoyl-L-aspartate + H(+). It participates in pyrimidine metabolism; UMP biosynthesis via de novo pathway; (S)-dihydroorotate from bicarbonate: step 3/3. Catalyzes the reversible cyclization of carbamoyl aspartate to dihydroorotate. The polypeptide is Dihydroorotase (Pseudomonas putida (strain ATCC 47054 / DSM 6125 / CFBP 8728 / NCIMB 11950 / KT2440)).